The primary structure comprises 233 residues: Large ribosomal subunit protein uL1 (233 aa).

The protein belongs to the universal ribosomal protein uL1 family. As to quaternary structure, part of the 50S ribosomal subunit.

In terms of biological role, binds directly to 23S rRNA. The L1 stalk is quite mobile in the ribosome, and is involved in E site tRNA release. Its function is as follows. Protein L1 is also a translational repressor protein, it controls the translation of the L11 operon by binding to its mRNA. The protein is Large ribosomal subunit protein uL1 of Rhizobium etli (strain ATCC 51251 / DSM 11541 / JCM 21823 / NBRC 15573 / CFN 42).